The chain runs to 101 residues: Urease subunit beta 1 (101 aa).

The protein belongs to the urease beta subunit family. In terms of assembly, heterotrimer of UreA (gamma), UreB (beta) and UreC (alpha) subunits. Three heterotrimers associate to form the active enzyme.

The protein localises to the cytoplasm. It carries out the reaction urea + 2 H2O + H(+) = hydrogencarbonate + 2 NH4(+). The protein operates within nitrogen metabolism; urea degradation; CO(2) and NH(3) from urea (urease route): step 1/1. Disruption of the ure1 gene cluster suggests that it protects brucellae during their passage through the stomach. The major route of infection in human brucellosis is oral. This chain is Urease subunit beta 1, found in Brucella abortus (strain 2308).